Consider the following 736-residue polypeptide: Phosphoribosylformylglycinamidine synthase subunit PurL (736 aa).

Histidine 48 is a catalytic residue. Residues tyrosine 51 and lysine 90 each contribute to the ATP site. Residue glutamate 92 coordinates Mg(2+). Substrate contacts are provided by residues serine 93–histidine 96 and arginine 115. Residue histidine 94 is the Proton acceptor of the active site. Residue aspartate 116 coordinates Mg(2+). Glutamine 239 lines the substrate pocket. Aspartate 267 provides a ligand contact to Mg(2+). Glutamate 311–glutamine 313 lines the substrate pocket. ATP-binding residues include aspartate 492 and glycine 529. Asparagine 530 serves as a coordination point for Mg(2+). Serine 532 contributes to the substrate binding site.

The protein belongs to the FGAMS family. Monomer. Part of the FGAM synthase complex composed of 1 PurL, 1 PurQ and 2 PurS subunits.

It localises to the cytoplasm. It catalyses the reaction N(2)-formyl-N(1)-(5-phospho-beta-D-ribosyl)glycinamide + L-glutamine + ATP + H2O = 2-formamido-N(1)-(5-O-phospho-beta-D-ribosyl)acetamidine + L-glutamate + ADP + phosphate + H(+). Its pathway is purine metabolism; IMP biosynthesis via de novo pathway; 5-amino-1-(5-phospho-D-ribosyl)imidazole from N(2)-formyl-N(1)-(5-phospho-D-ribosyl)glycinamide: step 1/2. Its function is as follows. Part of the phosphoribosylformylglycinamidine synthase complex involved in the purines biosynthetic pathway. Catalyzes the ATP-dependent conversion of formylglycinamide ribonucleotide (FGAR) and glutamine to yield formylglycinamidine ribonucleotide (FGAM) and glutamate. The FGAM synthase complex is composed of three subunits. PurQ produces an ammonia molecule by converting glutamine to glutamate. PurL transfers the ammonia molecule to FGAR to form FGAM in an ATP-dependent manner. PurS interacts with PurQ and PurL and is thought to assist in the transfer of the ammonia molecule from PurQ to PurL. This Bradyrhizobium sp. (strain ORS 278) protein is Phosphoribosylformylglycinamidine synthase subunit PurL.